Here is a 418-residue protein sequence, read N- to C-terminus: Serpin A9 (418 aa).

The first 25 residues, 1 to 25 (MGSSSFYRVLLLVGFCAPIFCMLSS), serve as a signal peptide directing secretion. Residues asparagine 103, asparagine 213, and asparagine 224 are each glycosylated (N-linked (GlcNAc...) asparagine).

The protein belongs to the serpin family.

The protein resides in the secreted. The protein is Serpin A9 (Serpina9) of Mus musculus (Mouse).